We begin with the raw amino-acid sequence, 250 residues long: 3-deoxy-manno-octulosonate cytidylyltransferase (250 aa).

The protein belongs to the KdsB family.

The protein resides in the cytoplasm. The catalysed reaction is 3-deoxy-alpha-D-manno-oct-2-ulosonate + CTP = CMP-3-deoxy-beta-D-manno-octulosonate + diphosphate. The protein operates within nucleotide-sugar biosynthesis; CMP-3-deoxy-D-manno-octulosonate biosynthesis; CMP-3-deoxy-D-manno-octulosonate from 3-deoxy-D-manno-octulosonate and CTP: step 1/1. It functions in the pathway bacterial outer membrane biogenesis; lipopolysaccharide biosynthesis. Functionally, activates KDO (a required 8-carbon sugar) for incorporation into bacterial lipopolysaccharide in Gram-negative bacteria. This Pectobacterium carotovorum subsp. carotovorum (strain PC1) protein is 3-deoxy-manno-octulosonate cytidylyltransferase.